The primary structure comprises 441 residues: MQLYDSLSKTKKNLNKKTINLYCCGPTVYNYIHIGNARPVILVDVLTRYLKSRNIKINYLQNITDIDDKIILKALDNNLTELEISQKYTKAYLEDLESLNINQPDKIILISEKMNEMVKFIKDLVDIKAAYELDGDVYFDIKKYQNEYCKLSGYKLDELISGKRIEIDSKKKYSLDFSLWKKTQIGIKWDSFFGLGRPGWHTECVLLIDEYFNHQTIDIHVGGIDLKFPHHENERIQFIAKNNKELADIWLHNGHLQINDEKMSKSLGNVILVKDFIKKHNKNTLRWIFLTTNYTQPLNISDDLIYQANKFFEKLTNLSKKTIQFIIKNDLKISLIKQSKYIDQFNNYMDDDLNTSLVLSLIDSLIKQINKNILDNISDNFNLLISSLSYILDVLGFKDVFNYKFKKEIKELFLKWQQLVKDKEFDKADLIRKDLIEQGIL.

Residue cysteine 24 coordinates Zn(2+). The short motif at 26 to 36 (PTVYNYIHIGN) is the 'HIGH' region element. 3 residues coordinate Zn(2+): cysteine 204, histidine 230, and glutamate 234. The 'KMSKS' region motif lies at 262-266 (KMSKS). ATP is bound at residue lysine 265.

The protein belongs to the class-I aminoacyl-tRNA synthetase family. In terms of assembly, monomer. Zn(2+) serves as cofactor.

Its subcellular location is the cytoplasm. The catalysed reaction is tRNA(Cys) + L-cysteine + ATP = L-cysteinyl-tRNA(Cys) + AMP + diphosphate. The polypeptide is Cysteine--tRNA ligase (Mycoplasma capricolum subsp. capricolum (strain California kid / ATCC 27343 / NCTC 10154)).